The sequence spans 1492 residues: Condensin-2 complex subunit D3-L (1492 aa).

Residues 152–201 (WPRDPNASRKRKKDTLKSSQGDNRGGRKRPRPPRRDEQEMEDLSEEEQDE) form a disordered region. Residues 189–201 (QEMEDLSEEEQDE) are compositionally biased toward acidic residues. HEAT repeat units lie at residues 543-581 (SSDG…CHLI), 583-619 (CSSE…AQPH), and 621-659 (VLIQ…QSIT). Disordered regions lie at residues 1269–1345 (QLER…PRPR), 1359–1406 (RKAA…SLVG), and 1454–1492 (IMSP…KPSN). Residues 1277 to 1290 (NVQNPPSAESTGSP) are compositionally biased toward polar residues. Positions 1377–1388 (PSTPSPARTTSS) are enriched in low complexity.

Component of the condensin-2 complex, which contains the smc2 and smc4 heterodimer, and three non SMC subunits, ncapg2, ncaph2 and ncapd3 that probably regulate the complex.

It localises to the nucleus. Its function is as follows. Regulatory subunit of the condensin-2 complex, a complex which establishes mitotic chromosome architecture and is involved in physical rigidity of the chromatid axis. The protein is Condensin-2 complex subunit D3-L of Xenopus laevis (African clawed frog).